Here is a 285-residue protein sequence, read N- to C-terminus: Urease accessory protein UreD 1 (285 aa).

This sequence belongs to the UreD family. UreD, UreF and UreG form a complex that acts as a GTP-hydrolysis-dependent molecular chaperone, activating the urease apoprotein by helping to assemble the nickel containing metallocenter of UreC. The UreE protein probably delivers the nickel.

It is found in the cytoplasm. Its function is as follows. Required for maturation of urease via the functional incorporation of the urease nickel metallocenter. This Pseudomonas syringae pv. syringae (strain B728a) protein is Urease accessory protein UreD 1.